We begin with the raw amino-acid sequence, 408 residues long: Aminoacylase-1 (408 aa).

Zn(2+) is bound at residue His-80. Residue Asp-82 is part of the active site. Asp-113 contributes to the Zn(2+) binding site. Glu-147 acts as the Proton acceptor in catalysis. The Zn(2+) site is built by Glu-148, Glu-175, and His-373.

This sequence belongs to the peptidase M20A family. In terms of assembly, homodimer. Interacts with SPHK1. The cofactor is Zn(2+). Expression is highest in kidney, strong in brain and weaker in placenta and spleen.

It localises to the cytoplasm. The catalysed reaction is an N-acyl-L-amino acid + H2O = an L-alpha-amino acid + a carboxylate. The enzyme catalyses N-acetyl-L-methionine + H2O = L-methionine + acetate. It carries out the reaction N-acetyl-L-glutamine + H2O = L-glutamine + acetate. Its function is as follows. Catalyzes the hydrolysis of N-acetylated amino acids to acetate and free amino acids. The protein is Aminoacylase-1 (ACY1) of Homo sapiens (Human).